The following is a 413-amino-acid chain: Multifunctional CCA protein (413 aa).

The ATP site is built by glycine 8 and arginine 11. Residues glycine 8 and arginine 11 each coordinate CTP. 2 residues coordinate Mg(2+): aspartate 21 and aspartate 23. Positions 91, 143, and 146 each coordinate ATP. Residues arginine 91, arginine 143, and arginine 146 each coordinate CTP. In terms of domain architecture, HD spans 232–333 (TGVHVMMVVD…VRFFERSDAL (102 aa)).

It belongs to the tRNA nucleotidyltransferase/poly(A) polymerase family. Bacterial CCA-adding enzyme type 1 subfamily. Monomer. Can also form homodimers and oligomers. The cofactor is Mg(2+). Ni(2+) serves as cofactor.

The catalysed reaction is a tRNA precursor + 2 CTP + ATP = a tRNA with a 3' CCA end + 3 diphosphate. It carries out the reaction a tRNA with a 3' CCA end + 2 CTP + ATP = a tRNA with a 3' CCACCA end + 3 diphosphate. Functionally, catalyzes the addition and repair of the essential 3'-terminal CCA sequence in tRNAs without using a nucleic acid template. Adds these three nucleotides in the order of C, C, and A to the tRNA nucleotide-73, using CTP and ATP as substrates and producing inorganic pyrophosphate. tRNA 3'-terminal CCA addition is required both for tRNA processing and repair. Also involved in tRNA surveillance by mediating tandem CCA addition to generate a CCACCA at the 3' terminus of unstable tRNAs. While stable tRNAs receive only 3'-terminal CCA, unstable tRNAs are marked with CCACCA and rapidly degraded. This chain is Multifunctional CCA protein, found in Burkholderia ambifaria (strain ATCC BAA-244 / DSM 16087 / CCUG 44356 / LMG 19182 / AMMD) (Burkholderia cepacia (strain AMMD)).